Here is a 669-residue protein sequence, read N- to C-terminus: DNA mismatch repair protein MutL (669 aa).

Residues E361–G409 are disordered. Polar residues-rich tracts occupy residues V363 to Y384 and T393 to T402.

The protein belongs to the DNA mismatch repair MutL/HexB family.

This protein is involved in the repair of mismatches in DNA. It is required for dam-dependent methyl-directed DNA mismatch repair. May act as a 'molecular matchmaker', a protein that promotes the formation of a stable complex between two or more DNA-binding proteins in an ATP-dependent manner without itself being part of a final effector complex. The chain is DNA mismatch repair protein MutL from Proteus mirabilis (strain HI4320).